We begin with the raw amino-acid sequence, 340 residues long: Probable complex I intermediate-associated protein 30, mitochondrial (340 aa).

Belongs to the CIA30 family.

It is found in the mitochondrion. Its function is as follows. Chaperone protein involved in the assembly of the mitochondrial NADH:ubiquinone oxidoreductase complex (complex I). Required for normal growth and reproduction. This chain is Probable complex I intermediate-associated protein 30, mitochondrial (nuaf-1), found in Caenorhabditis briggsae.